Here is a 218-residue protein sequence, read N- to C-terminus: PKHD-type hydroxylase Sala_1910 (218 aa).

The Fe2OG dioxygenase domain maps to 74–172 (RIAPPLLTRY…RLVAITFIQS (99 aa)). Fe cation is bound by residues histidine 92, aspartate 94, and histidine 153. 2-oxoglutarate is bound at residue arginine 163.

It depends on Fe(2+) as a cofactor. L-ascorbate is required as a cofactor.

This is PKHD-type hydroxylase Sala_1910 from Sphingopyxis alaskensis (strain DSM 13593 / LMG 18877 / RB2256) (Sphingomonas alaskensis).